Reading from the N-terminus, the 185-residue chain is dCTP deaminase (185 aa).

DCTP-binding positions include 107-112, 131-133, Gln-152, Tyr-166, and Gln-176; these read KSTYAR and TLE. The Proton donor/acceptor role is filled by Glu-133.

Belongs to the dCTP deaminase family. Homotrimer.

It carries out the reaction dCTP + H2O + H(+) = dUTP + NH4(+). Its pathway is pyrimidine metabolism; dUMP biosynthesis; dUMP from dCTP (dUTP route): step 1/2. Functionally, catalyzes the deamination of dCTP to dUTP. The sequence is that of dCTP deaminase from Anaplasma phagocytophilum (strain HZ).